A 442-amino-acid polypeptide reads, in one-letter code: 4-hydroxyphenylpyruvate dioxygenase (442 aa).

VOC domains are found at residues 45–200 (RFHH…GFEA) and 216–376 (RLDH…IFTK). Fe cation-binding residues include histidine 219, histidine 301, and glutamate 387.

The protein belongs to the 4HPPD family. Fe cation serves as cofactor.

The protein localises to the cytoplasm. It catalyses the reaction 3-(4-hydroxyphenyl)pyruvate + O2 = homogentisate + CO2. It functions in the pathway amino-acid degradation; L-phenylalanine degradation; acetoacetate and fumarate from L-phenylalanine: step 3/6. It participates in cofactor biosynthesis; prenylquinone biosynthesis. The chain is 4-hydroxyphenylpyruvate dioxygenase from Daucus carota (Wild carrot).